The chain runs to 341 residues: Glucokinase (341 aa).

18–23 is a binding site for ATP; that stretch reads GDIGGT.

It belongs to the bacterial glucokinase family.

It localises to the cytoplasm. The enzyme catalyses D-glucose + ATP = D-glucose 6-phosphate + ADP + H(+). The polypeptide is Glucokinase (Rhizobium leguminosarum bv. trifolii (strain WSM2304)).